A 184-amino-acid chain; its full sequence is UPF0301 protein SPO0296 (184 aa).

This sequence belongs to the UPF0301 (AlgH) family.

This chain is UPF0301 protein SPO0296, found in Ruegeria pomeroyi (strain ATCC 700808 / DSM 15171 / DSS-3) (Silicibacter pomeroyi).